A 1358-amino-acid chain; its full sequence is Phosphoinositide 3-kinase regulatory subunit 4 (1358 aa).

Gly-2 carries the N-myristoyl glycine lipid modification. The Protein kinase domain maps to 26-324; it reads FEYDKSLGST…AFPEVFYTFL (299 aa). ATP-binding positions include 32 to 40 and Lys-53; that span reads LGSTRFFKV. Asp-148 (proton acceptor) is an active-site residue. 4 HEAT repeats span residues 413 to 450, 458 to 495, 572 to 610, and 612 to 648; these read ILLD…LVQE, IYPE…TALR, KAND…YVGW, and SSSI…LGLL. Phosphoserine is present on residues Ser-808, Ser-813, Ser-853, and Ser-865. Positions 875-899 are disordered; sequence LPKTSDHEVVPTGKSPRSESSAGVC. WD repeat units follow at residues 991–1030, 1040–1079, 1093–1134, 1139–1178, 1182–1223, and 1237–1278; these read EHKS…GKTT, RIGG…LPKS, KEDG…NAWT, LKSG…PISS, PSRA…RRLT, and PSPH…RSYV. The tract at residues 1307 to 1326 is disordered; sequence KQKVGPSDDTPRRGPESLPV. Residues 1315–1326 show a composition bias toward basic and acidic residues; it reads DTPRRGPESLPV. Thr-1316 carries the post-translational modification Phosphothreonine. The stretch at 1327–1358 is one WD 7 repeat; the sequence is GHHDIITDIATFQTTQGFIVTASRDGIVKVWK.

Belongs to the protein kinase superfamily. Ser/Thr protein kinase family. In terms of assembly, component of the PI3K (PI3KC3/PI3K-III/class III phosphatidylinositol 3-kinase) complex the core of which is composed of the catalytic subunit PIK3C3, the regulatory subunit PIK3R4 and BECN1 associating with additional regulatory/auxiliary subunits to form alternative complex forms. Alternative complex forms containing a fourth regulatory subunit in a mutually exclusive manner are PI3K complex I (PI3KC3-C1) containing ATG14, and PI3K complex II (PI3KC3-C2) containing UVRAG. PI3KC3-C1 displays a V-shaped architecture with PIK3R4 serving as a bridge between PIK3C3 and the ATG14:BECN1 subcomplex. Both, PI3KC3-C1 and PI3KC3-C2, can associate with further regulatory subunits, such as RUBCN, SH3GLB1/Bif-1, AMBRA1 and NRBF2. PI3KC3-C1 probably associates with PIK3CB. Interacts with RAB7A in the presence of PIK3C3/VPS34. Interacts with NRBF2. Interacts with ARMC3. Mn(2+) serves as cofactor. Myristoylated. Post-translationally, probably autophosphorylated.

The protein localises to the late endosome. Its subcellular location is the cytoplasmic vesicle. It is found in the autophagosome. It localises to the membrane. It carries out the reaction L-seryl-[protein] + ATP = O-phospho-L-seryl-[protein] + ADP + H(+). It catalyses the reaction L-threonyl-[protein] + ATP = O-phospho-L-threonyl-[protein] + ADP + H(+). Functionally, regulatory subunit of the PI3K complex that mediates formation of phosphatidylinositol 3-phosphate; different complex forms are believed to play a role in multiple membrane trafficking pathways: PI3KC3-C1 is involved in initiation of autophagosomes and PI3KC3-C2 in maturation of autophagosomes and endocytosis. Involved in regulation of degradative endocytic trafficking and cytokinesis, probably in the context of PI3KC3-C2. The chain is Phosphoinositide 3-kinase regulatory subunit 4 (Pik3r4) from Rattus norvegicus (Rat).